Consider the following 647-residue polypeptide: DNA mismatch repair protein MutL (647 aa).

This sequence belongs to the DNA mismatch repair MutL/HexB family.

Functionally, this protein is involved in the repair of mismatches in DNA. It is required for dam-dependent methyl-directed DNA mismatch repair. May act as a 'molecular matchmaker', a protein that promotes the formation of a stable complex between two or more DNA-binding proteins in an ATP-dependent manner without itself being part of a final effector complex. The protein is DNA mismatch repair protein MutL of Bacillus cereus (strain Q1).